Here is a 100-residue protein sequence, read N- to C-terminus: Putative pterin-4-alpha-carbinolamine dehydratase (100 aa).

This sequence belongs to the pterin-4-alpha-carbinolamine dehydratase family.

The enzyme catalyses (4aS,6R)-4a-hydroxy-L-erythro-5,6,7,8-tetrahydrobiopterin = (6R)-L-erythro-6,7-dihydrobiopterin + H2O. This Allorhizobium ampelinum (strain ATCC BAA-846 / DSM 112012 / S4) (Agrobacterium vitis (strain S4)) protein is Putative pterin-4-alpha-carbinolamine dehydratase.